The primary structure comprises 175 residues: Ribosome-binding factor A (175 aa).

Residues 131–175 are disordered; it reads KPAGEADPYRDRGSVDEPSDAGGLVIRTSDGLEAENTGDDYQAED. Acidic residues predominate over residues 162-175; the sequence is LEAENTGDDYQAED.

This sequence belongs to the RbfA family. In terms of assembly, monomer. Binds 30S ribosomal subunits, but not 50S ribosomal subunits or 70S ribosomes.

The protein resides in the cytoplasm. One of several proteins that assist in the late maturation steps of the functional core of the 30S ribosomal subunit. Associates with free 30S ribosomal subunits (but not with 30S subunits that are part of 70S ribosomes or polysomes). Required for efficient processing of 16S rRNA. May interact with the 5'-terminal helix region of 16S rRNA. This is Ribosome-binding factor A from Mycobacterium ulcerans (strain Agy99).